A 471-amino-acid chain; its full sequence is uncharacterized protein (471 aa).

The segment at 13–57 (KGGATIGATPMESDSSVSALSGSSASKVSRRGRRRSHLASKSSAP) is disordered. Positions 27 to 39 (SSVSALSGSSASK) are enriched in low complexity. Residues 40-50 (VSRRGRRRSHL) are compositionally biased toward basic residues. 2 consecutive CCHC-type zinc fingers follow at residues 397–414 (YACHRCVGFDHKVSECRQ) and 417–434 (SVCRQCGQQGHTAAKCQN). Positions 438-457 (CRNCRHRGQPSGHYMLSNAC) are gag-like cysteine motif.

It to corresponding ORF of B.mori (R1BM).

This is an uncharacterized protein from Drosophila melanogaster (Fruit fly).